The following is a 101-amino-acid chain: Large ribosomal subunit protein uL24 (101 aa).

It belongs to the universal ribosomal protein uL24 family. Part of the 50S ribosomal subunit.

Its function is as follows. One of two assembly initiator proteins, it binds directly to the 5'-end of the 23S rRNA, where it nucleates assembly of the 50S subunit. In terms of biological role, one of the proteins that surrounds the polypeptide exit tunnel on the outside of the subunit. This chain is Large ribosomal subunit protein uL24, found in Streptococcus sanguinis (strain SK36).